A 346-amino-acid polypeptide reads, in one-letter code: UPF0324 membrane protein FN0533 (346 aa).

10 helical membrane passes run 5 to 22, 27 to 49, 62 to 81, 86 to 108, 115 to 137, 147 to 169, 216 to 233, 248 to 270, 283 to 305, and 315 to 337; these read LYGIILCFLLALPAWKLG, LVGGPVFGIIIGIVIAILLKNRA, VLQYAVILLGFGLNLQTIIS, SLPIIVSTISTSLIIAYILAKLI, VILIGVGSSICGGSAIAATAPVI, AISVIFLFNVIAALIFPTLGDIL, LTRTLAIIPITLFLAVYN, IFPMFIVYFILASIITTVCNYFI, INNVFSFFKHLSKFFIIMAMVAI, and ILSGAKPLTLGFCCWFAISLVSI.

Belongs to the UPF0324 family.

It is found in the cell membrane. The protein is UPF0324 membrane protein FN0533 of Fusobacterium nucleatum subsp. nucleatum (strain ATCC 25586 / DSM 15643 / BCRC 10681 / CIP 101130 / JCM 8532 / KCTC 2640 / LMG 13131 / VPI 4355).